A 210-amino-acid polypeptide reads, in one-letter code: Small ribosomal subunit protein uS7 (210 aa).

It belongs to the universal ribosomal protein uS7 family. As to quaternary structure, component of the small ribosomal subunit. Part of the small subunit (SSU) processome, composed of more than 70 proteins and the RNA chaperone small nucleolar RNA (snoRNA) U3.

Its subcellular location is the cytoplasm. The protein localises to the nucleus. It is found in the nucleolus. In terms of biological role, component of the small ribosomal subunit. The ribosome is a large ribonucleoprotein complex responsible for the synthesis of proteins in the cell. Part of the small subunit (SSU) processome, first precursor of the small eukaryotic ribosomal subunit. During the assembly of the SSU processome in the nucleolus, many ribosome biogenesis factors, an RNA chaperone and ribosomal proteins associate with the nascent pre-rRNA and work in concert to generate RNA folding, modifications, rearrangements and cleavage as well as targeted degradation of pre-ribosomal RNA by the RNA exosome. This is Small ribosomal subunit protein uS7 (rps-5) from Caenorhabditis elegans.